The sequence spans 368 residues: Spermidine/putrescine import ATP-binding protein PotA (368 aa).

Positions 8-238 constitute an ABC transporter domain; it reads IELKNVSKIF…PVNLFVARFV (231 aa). 40-47 serves as a coordination point for ATP; sequence GPSGCGKT.

Belongs to the ABC transporter superfamily. Spermidine/putrescine importer (TC 3.A.1.11.1) family. The complex is composed of two ATP-binding proteins (PotA), two transmembrane proteins (PotB and PotC) and a solute-binding protein (PotD).

The protein resides in the cell membrane. It catalyses the reaction ATP + H2O + polyamine-[polyamine-binding protein]Side 1 = ADP + phosphate + polyamineSide 2 + [polyamine-binding protein]Side 1.. Its function is as follows. Part of the ABC transporter complex PotABCD involved in spermidine/putrescine import. Responsible for energy coupling to the transport system. This chain is Spermidine/putrescine import ATP-binding protein PotA, found in Lawsonia intracellularis (strain PHE/MN1-00).